Reading from the N-terminus, the 187-residue chain is MSKSASRARLADIIRTRSFGRGEITLASGRKSDFYFNLKPTMLDPEGAALLAELTYETLRDEKVDYVGGLEMGAVPLAGAIAQLSWLKNHPISAFFVRKKPKEHGARLSVEGLAKGESLAGKRCVIVEDVTTTGGSAIKAVEAVKESGAEIVLVLTMVDREEGATEAFAAAGLPFRSLYKASEFLNV.

Residues R98, K99, K102, H104, and 128-136 (EDVTTTGGS) each bind 5-phospho-alpha-D-ribose 1-diphosphate. 2 residues coordinate orotate: T132 and R160.

This sequence belongs to the purine/pyrimidine phosphoribosyltransferase family. PyrE subfamily. Homodimer. Mg(2+) is required as a cofactor.

It catalyses the reaction orotidine 5'-phosphate + diphosphate = orotate + 5-phospho-alpha-D-ribose 1-diphosphate. It functions in the pathway pyrimidine metabolism; UMP biosynthesis via de novo pathway; UMP from orotate: step 1/2. Its function is as follows. Catalyzes the transfer of a ribosyl phosphate group from 5-phosphoribose 1-diphosphate to orotate, leading to the formation of orotidine monophosphate (OMP). This is Orotate phosphoribosyltransferase from Rhodopseudomonas palustris (strain TIE-1).